The primary structure comprises 246 residues: Dihydroorotate dehydrogenase B (NAD(+)), electron transfer subunit (246 aa).

Positions 3 to 97 (EKYTVEKVYE…TGPLGNGFNV (95 aa)) constitute an FAD-binding FR-type domain. FAD contacts are provided by residues 50–53 (RPIS) and 72–73 (GT). Residues Cys211, Cys216, Cys219, and Cys231 each contribute to the [2Fe-2S] cluster site.

The protein belongs to the PyrK family. In terms of assembly, heterotetramer of 2 PyrK and 2 PyrD type B subunits. [2Fe-2S] cluster serves as cofactor. FAD is required as a cofactor.

The protein operates within pyrimidine metabolism; UMP biosynthesis via de novo pathway; orotate from (S)-dihydroorotate (NAD(+) route): step 1/1. Functionally, responsible for channeling the electrons from the oxidation of dihydroorotate from the FMN redox center in the PyrD type B subunit to the ultimate electron acceptor NAD(+). This chain is Dihydroorotate dehydrogenase B (NAD(+)), electron transfer subunit, found in Clostridium acetobutylicum (strain ATCC 824 / DSM 792 / JCM 1419 / IAM 19013 / LMG 5710 / NBRC 13948 / NRRL B-527 / VKM B-1787 / 2291 / W).